The sequence spans 92 residues: Elongation factor 1-beta (92 aa).

The protein belongs to the EF-1-beta/EF-1-delta family.

Promotes the exchange of GDP for GTP in EF-1-alpha/GDP, thus allowing the regeneration of EF-1-alpha/GTP that could then be used to form the ternary complex EF-1-alpha/GTP/AAtRNA. The chain is Elongation factor 1-beta from Hyperthermus butylicus (strain DSM 5456 / JCM 9403 / PLM1-5).